The following is a 787-amino-acid chain: Signal transducer and activator of transcription 5B (787 aa).

A Phosphotyrosine modification is found at Y90. A Phosphoserine modification is found at S128. The region spanning 589–686 is the SH2 domain; the sequence is WNDGAILGFV…EVYSKYYTPV (98 aa). Y682 carries the phosphotyrosine modification. Y699 is subject to Phosphotyrosine; by HCK, JAK and PTK6.

The protein belongs to the transcription factor STAT family. Upon activation, forms a homodimer or a heterodimer with a related family member. Binds NR3C1. Interacts with NCOA1. Interacts with NMI. Interacts with SOCS7. Interacts (via SH2 domain) with INSR. Interacts with CPEB3; this inhibits STAT5B-mediated transcriptional activation. In terms of processing, tyrosine phosphorylated in response to signaling via activated KIT, resulting in translocation to the nucleus. Tyrosine phosphorylated in response to signaling via activated FLT3; wild-type FLT3 results in much weaker phosphorylation than constitutively activated mutant FLT3. Alternatively, can be phosphorylated by JAK2. Phosphorylation at Tyr-699 by PTK6 or HCK leads to an increase of its transcriptional activity.

Its subcellular location is the cytoplasm. It localises to the nucleus. In terms of biological role, carries out a dual function: signal transduction and activation of transcription. Mediates cellular responses to the cytokine KITLG/SCF and other growth factors. Binds to the GAS element and activates PRL-induced transcription. Positively regulates hematopoietic/erythroid differentiation. The protein is Signal transducer and activator of transcription 5B (STAT5B) of Sus scrofa (Pig).